A 238-amino-acid polypeptide reads, in one-letter code: DNA repair protein RecO (238 aa).

It belongs to the RecO family.

Its function is as follows. Involved in DNA repair and RecF pathway recombination. The chain is DNA repair protein RecO from Aliivibrio fischeri (strain ATCC 700601 / ES114) (Vibrio fischeri).